Consider the following 593-residue polypeptide: Aspartate--tRNA ligase (593 aa).

Glu180 contributes to the L-aspartate binding site. Residues 204–207 are aspartate; that stretch reads QIFK. Residue Arg226 coordinates L-aspartate. Residues 226–228 and Gln235 each bind ATP; that span reads RDE. His453 is an L-aspartate binding site. Glu487 contacts ATP. Arg494 contacts L-aspartate. 539–542 serves as a coordination point for ATP; sequence GLDR.

Belongs to the class-II aminoacyl-tRNA synthetase family. Type 1 subfamily. In terms of assembly, homodimer.

It is found in the cytoplasm. The enzyme catalyses tRNA(Asp) + L-aspartate + ATP = L-aspartyl-tRNA(Asp) + AMP + diphosphate. Catalyzes the attachment of L-aspartate to tRNA(Asp) in a two-step reaction: L-aspartate is first activated by ATP to form Asp-AMP and then transferred to the acceptor end of tRNA(Asp). This chain is Aspartate--tRNA ligase, found in Clostridium botulinum (strain Okra / Type B1).